The following is a 1149-amino-acid chain: Guanine nucleotide exchange factor DBS (1149 aa).

In terms of domain architecture, CRAL-TRIO spans 52-224; it reads AATASDEIMH…DLGGTLDYCH (173 aa). One copy of the Spectrin repeat lies at 351–456; the sequence is LQLRHFEQGF…VTRRRGLLSK (106 aa). 4 positions are modified to phosphoserine: serine 457, serine 462, serine 471, and serine 480. The stretch at 503–529 forms a coiled coil; sequence LETGAENKIQELNEIYKEYECILNQDL. Residues 555-627 form a disordered region; it reads KKLAAKQTRP…RTSSTGEEEE (73 aa). Over residues 583-594 the composition is skewed to low complexity; the sequence is PGSWRSSENSSS. A compositionally biased stretch (basic and acidic residues) spans 607–616; sequence AKSEMSEPRQ. Serine 621 bears the Phosphoserine mark. Threonine 622 bears the Phosphothreonine mark. The region spanning 632–812 is the DH domain; it reads LRRHVMNELL…LGILKAVNDS (181 aa). One can recognise a PH domain in the interval 841 to 950; the sequence is TDHKKGHTKV…IRKVLTSQLQ (110 aa). Residues 956–1033 form a disordered region; it reads SQHRALEQSH…EAPEEDGGWS (78 aa). Residues 966-978 show a composition bias toward low complexity; it reads SLPLPTPSSTSPT. Serine 1033, serine 1034, serine 1041, and serine 1042 each carry phosphoserine. An SH3 domain is found at 1055–1116; it reads LVPGKYTVVM…PASSLSTLLG (62 aa).

It belongs to the MCF2 family. Interacts with GTP-bound RAC1. Interacts with CDC42. Interacts with RHOA. Interacts with CCPG1, which results in specific inhibition of its exchange activity toward RHOA, but does not affect its activity on CDC42. In terms of tissue distribution, expressed at low levels in several hemopoietic cell lines and in thymus and spleen, and at higher levels in other tissues, particularly in brain.

Its subcellular location is the cytoplasm. The protein resides in the cell membrane. Its function is as follows. Guanine nucleotide exchange factor that catalyzes guanine nucleotide exchange on RHOA and CDC42, and thereby contributes to the regulation of RHOA and CDC42 signaling pathways. Seems to lack activity with RAC1. Becomes activated and highly tumorigenic by truncation of the N-terminus. The sequence is that of Guanine nucleotide exchange factor DBS (Mcf2l) from Mus musculus (Mouse).